A 73-amino-acid polypeptide reads, in one-letter code: MDCCNEGACTKLDEDILDIPLDDPDANAAAAKIQASFRGHMTRKKIKGGEIDRKTKDAECANSTRGGDLRNGD.

The 30-residue stretch at 26–55 folds into the IQ domain; the sequence is ANAAAAKIQASFRGHMTRKKIKGGEIDRKT. Phosphoserine; by PKC is present on serine 36. Over residues 47–59 the composition is skewed to basic and acidic residues; the sequence is KGGEIDRKTKDAE. The segment at 47 to 73 is disordered; it reads KGGEIDRKTKDAECANSTRGGDLRNGD.

The protein belongs to the neurogranin family.

Functionally, acts as a 'third messenger' substrate of protein kinase C-mediated molecular cascades during synaptic development and remodeling. Binds to calmodulin in the absence of calcium. The sequence is that of Neurogranin (NRGN) from Serinus canaria (Island canary).